We begin with the raw amino-acid sequence, 324 residues long: tRNA dimethylallyltransferase (324 aa).

17–24 provides a ligand contact to ATP; that stretch reads GPTASGKT. Position 19–24 (19–24) interacts with substrate; it reads TASGKT. 4 interaction with substrate tRNA regions span residues 42 to 45, 166 to 170, 251 to 256, and 284 to 291; these read DSAL, QRIQR, RCVGYR, and KRQITWLR.

This sequence belongs to the IPP transferase family. Monomer. Mg(2+) is required as a cofactor.

It catalyses the reaction adenosine(37) in tRNA + dimethylallyl diphosphate = N(6)-dimethylallyladenosine(37) in tRNA + diphosphate. Catalyzes the transfer of a dimethylallyl group onto the adenine at position 37 in tRNAs that read codons beginning with uridine, leading to the formation of N6-(dimethylallyl)adenosine (i(6)A). The chain is tRNA dimethylallyltransferase from Burkholderia orbicola (strain MC0-3).